A 420-amino-acid chain; its full sequence is MKKINILVPDLPESISDATVVKWHKKIGDTVHCDDNIVDIETDKVMLEVSSPCDGILQSILEKEGKVVISQQTLGEINKSTVVDNHLSNNHIIEKEDNLLKKEEKYITTEEKKEIEYLLKDNHKHLTPSMRRSVKIHNINNGFLNQVIETSKKTNFENIIKEEKKESNQILFNHNIFNANENNKNNNNKVTNRVKMTRLRQRIAERLLDSKNNTAMLTTFHEVNMKPIILLRKKYGEDFEKKHNVRIGFMSFFVKAVIQALKNFPEINAYIDQTDIVFYKNFDISIAISTPRGLITPVIRNADTMTMAEIEKKIKDFSIKGLQNKINIKELMGGNFTITNGGVFGSLMSTPIINPPQTAILGMHVIQERPVVVNGQIKILPMMYLALSYDHRLIDGKESVGFLINIKNILEDFNRIAIDV.

Residues 3–78 (KINILVPDLP…ISQQTLGEIN (76 aa)) enclose the Lipoyl-binding domain. Lysine 44 carries the post-translational modification N6-lipoyllysine. Residues histidine 391 and aspartate 395 contribute to the active site.

Belongs to the 2-oxoacid dehydrogenase family. In terms of assembly, forms a 24-polypeptide structural core with octahedral symmetry. Part of the 2-oxoglutarate dehydrogenase (OGDH) complex composed of E1 (2-oxoglutarate dehydrogenase), E2 (dihydrolipoamide succinyltransferase) and E3 (dihydrolipoamide dehydrogenase); the complex contains multiple copies of the three enzymatic components (E1, E2 and E3). (R)-lipoate is required as a cofactor.

It carries out the reaction N(6)-[(R)-dihydrolipoyl]-L-lysyl-[protein] + succinyl-CoA = N(6)-[(R)-S(8)-succinyldihydrolipoyl]-L-lysyl-[protein] + CoA. The protein operates within amino-acid degradation; L-lysine degradation via saccharopine pathway; glutaryl-CoA from L-lysine: step 6/6. In terms of biological role, E2 component of the 2-oxoglutarate dehydrogenase (OGDH) complex which catalyzes the second step in the conversion of 2-oxoglutarate to succinyl-CoA and CO(2). The polypeptide is Dihydrolipoyllysine-residue succinyltransferase component of 2-oxoglutarate dehydrogenase complex (sucB) (Buchnera aphidicola subsp. Acyrthosiphon pisum (strain APS) (Acyrthosiphon pisum symbiotic bacterium)).